We begin with the raw amino-acid sequence, 464 residues long: Putative F-box/LRR-repeat protein At3g59160 (464 aa).

In terms of domain architecture, F-box spans 12 to 60 (KDMINDLPDALLCHVLSYLTTKEAASTSLLSRRWRYLLAFVPNLEFDDS). 6 LRR repeats span residues 172-198 (TLKIRDGPPIDVKHVHLPKLKTLHLES), 200-225 (MFDEEDIGFSKLLSGCPELEELVLHH), 233-258 (SCSVSVATLKRLTFCCNNMKFCGMHE), 336-367 (VLCLSADTLEVLTYCCKQIPIFNNLTHVTIQS), 368-393 (TPKVGWKSLLKLLKNSPKLQTLVFQG), and 408-433 (KIEKQIEKVKHFLETMPHLEQLVLHY).

The protein is Putative F-box/LRR-repeat protein At3g59160 of Arabidopsis thaliana (Mouse-ear cress).